Consider the following 279-residue polypeptide: Methyltransferase ausD (279 aa).

S-adenosyl-L-methionine is bound by residues 124–125 (DL), 152–153 (DI), and arginine 244.

It belongs to the class I-like SAM-binding methyltransferase superfamily. Homodimer.

Its pathway is secondary metabolite biosynthesis; terpenoid biosynthesis. In terms of biological role, methyltransferase; part of the gene cluster that mediates the biosynthesis of calidodehydroaustin, a fungal meroterpenoid. The first step of the pathway is the synthesis of 3,5-dimethylorsellinic acid by the polyketide synthase ausA. 3,5-dimethylorsellinic acid is then prenylated by the polyprenyl transferase ausN. Further epoxidation by the FAD-dependent monooxygenase ausM and cyclization by the probable terpene cyclase ausL lead to the formation of protoaustinoid A. Protoaustinoid A is then oxidized to spiro-lactone preaustinoid A3 by the combined action of the FAD-binding monooxygenases ausB and ausC, and the dioxygenase ausE. Acid-catalyzed keto-rearrangement and ring contraction of the tetraketide portion of preaustinoid A3 by ausJ lead to the formation of preaustinoid A4. The aldo-keto reductase ausK, with the help of ausH, is involved in the next step by transforming preaustinoid A4 into isoaustinone which is in turn hydroxylated by the P450 monooxygenase ausI to form austinolide. The cytochrome P450 monooxygenase ausG modifies austinolide to austinol. Austinol is further acetylated to austin by the O-acetyltransferase ausP, which spontaneously changes to dehydroaustin. The cytochrome P450 monooxygenase ausR then converts dehydroaustin is into 7-dehydrodehydroaustin. The hydroxylation catalyzed by ausR permits the O-acetyltransferase ausQ to add an additional acetyl group to the molecule, leading to the formation of acetoxydehydroaustin. The short chain dehydrogenase ausT catalyzes the reduction of the double bond present between carbon atoms 1 and 2 to convert 7-dehydrodehydroaustin into 1,2-dihydro-7-hydroxydehydroaustin. AusQ catalyzes not only an acetylation reaction but also the addition of the PKS ausV diketide product to 1,2-dihydro-7-hydroxydehydroaustin, forming precalidodehydroaustin. Finally, the iron/alpha-ketoglutarate-dependent dioxygenase converts precalidodehydroaustin into calidodehydroaustin. This Aspergillus calidoustus protein is Methyltransferase ausD.